A 270-amino-acid chain; its full sequence is Outer membrane protein P.IIC (270 aa).

Positions 1-25 (MQPAKNLLFSSLLFSSLLFSSAARA) are cleaved as a signal peptide. The Extracellular portion of the chain corresponds to 26–35 (ASEDGGRGPY). Residues 36–44 (VQADLAYAA) form a beta stranded membrane-spanning segment. Residues 45–76 (ERITHDYPKPTGTGKNKISTVSDYFRNIRTHS) lie on the Periplasmic side of the membrane. A beta stranded transmembrane segment spans residues 77-85 (VHPRVSVGY). Over 86 to 89 (DFGS) the chain is Extracellular. Residues 90–96 (WRIAADY) form a beta stranded membrane-spanning segment. The Periplasmic portion of the chain corresponds to 97 to 142 (ARYRKWNNNKYSVSIKELLRNDNSASGVRGHLNIQTQKTEHQENGT). Residues 143–157 (FHAVSSLGLSTIYDF) traverse the membrane as a beta stranded segment. The Extracellular segment spans residues 158–162 (DTGSR). The beta stranded transmembrane segment at 163–173 (FKPYIGMRVAY) threads the bilayer. Over 174-221 (GHVRHQVRSVEQETEIITTYPSNGGGKVSLSSKMPPKSAHHQSNSIRR) the chain is Periplasmic. The tract at residues 194–217 (PSNGGGKVSLSSKMPPKSAHHQSN) is disordered. Residues 222–234 (VGLGVIAGVGFDI) form a beta stranded membrane-spanning segment. Residues 235-237 (TPN) lie on the Extracellular side of the membrane. Residues 238–246 (LTLDTGYRY) traverse the membrane as a beta stranded segment. The Periplasmic segment spans residues 247–261 (HNWGRLENTRFKTHE). Residues 262–270 (ASLGMRYRF) form a beta stranded membrane-spanning segment.

Belongs to the opacity porin family. As to quaternary structure, homotrimer.

Its subcellular location is the cell outer membrane. Functionally, this protein serves as a porin. The protein is Outer membrane protein P.IIC (piiC) of Neisseria gonorrhoeae.